We begin with the raw amino-acid sequence, 1270 residues long: ATP-dependent helicase/nuclease subunit A (1270 aa).

In terms of domain architecture, UvrD-like helicase ATP-binding spans 3–476 (TKWTEEQELA…IMLYKNFRSR (474 aa)). 24-31 (AAAGSGKT) contributes to the ATP binding site. In terms of domain architecture, UvrD-like helicase C-terminal spans 528–823 (IENLKVAGDI…RIMSIHKSKG (296 aa)).

It belongs to the helicase family. AddA subfamily. In terms of assembly, heterodimer of AddA and AddB/RexB. The cofactor is Mg(2+).

It catalyses the reaction Couples ATP hydrolysis with the unwinding of duplex DNA by translocating in the 3'-5' direction.. The enzyme catalyses ATP + H2O = ADP + phosphate + H(+). The heterodimer acts as both an ATP-dependent DNA helicase and an ATP-dependent, dual-direction single-stranded exonuclease. Recognizes the chi site generating a DNA molecule suitable for the initiation of homologous recombination. The AddA nuclease domain is required for chi fragment generation; this subunit has the helicase and 3' -&gt; 5' nuclease activities. This is ATP-dependent helicase/nuclease subunit A from Clostridium perfringens (strain SM101 / Type A).